The sequence spans 235 residues: Putative 4'-phosphopantetheinyl transferase HI_0152 (235 aa).

Residues Asp-112, Glu-114, and Glu-155 each coordinate Mg(2+).

Belongs to the P-Pant transferase superfamily. Gsp/Sfp/HetI/AcpT family. Mg(2+) serves as cofactor.

Functionally, may transfer the 4'-phosphopantetheine moiety from coenzyme A (CoA) to a serine residue of a carrier protein domain. This is Putative 4'-phosphopantetheinyl transferase HI_0152 from Haemophilus influenzae (strain ATCC 51907 / DSM 11121 / KW20 / Rd).